The sequence spans 262 residues: Small ribosomal subunit protein uS2 (262 aa).

The segment at 228–262 (VSNEEVAAEQNINLDDKEESEQAETTEENTSVESN) is disordered. Positions 243-254 (DKEESEQAETTE) are enriched in acidic residues.

It belongs to the universal ribosomal protein uS2 family.

In Staphylococcus epidermidis (strain ATCC 35984 / DSM 28319 / BCRC 17069 / CCUG 31568 / BM 3577 / RP62A), this protein is Small ribosomal subunit protein uS2.